The sequence spans 157 residues: Arginine repressor (157 aa).

The protein belongs to the ArgR family.

The protein localises to the cytoplasm. The protein operates within amino-acid biosynthesis; L-arginine biosynthesis [regulation]. Regulates arginine biosynthesis genes. The protein is Arginine repressor of Deinococcus radiodurans (strain ATCC 13939 / DSM 20539 / JCM 16871 / CCUG 27074 / LMG 4051 / NBRC 15346 / NCIMB 9279 / VKM B-1422 / R1).